We begin with the raw amino-acid sequence, 65 residues long: Hainantoxin-X.3 (65 aa).

The signal sequence occupies residues 1 to 20; it reads MNMKILVLVAVLCLVVSTHA. A propeptide spanning residues 21–37 is cleaved from the precursor; it reads ERHSKTDMGDSPMIQER. 3 cysteine pairs are disulfide-bonded: Cys-39-Cys-56, Cys-46-Cys-59, and Cys-55-Cys-64.

The protein belongs to the neurotoxin 36 family. 02 subfamily. In terms of tissue distribution, expressed by the venom gland.

It localises to the secreted. Its function is as follows. Reversibly blocks N-type calcium channels (Cav2.2/CACNA1B) in rat dorsal root ganglion cells. Elicits no toxic symptoms in either vertebrates or invertebrates during a period of 48 hours post-injection, when it was assayed in vivo by direct injection into mice and cockroaches. This is Hainantoxin-X.3 from Cyriopagopus hainanus (Chinese bird spider).